Consider the following 741-residue polypeptide: Homeobox protein AHox1 (741 aa).

Disordered stretches follow at residues 1–30, 61–96, 146–183, 203–226, 357–383, 476–501, and 616–642; these read MEKM…KSSS, KRRL…NFCR, VNPL…KSCC, ADSD…INQD, KTEE…PIRT, FDFP…NPQT, and QYGH…GTVK. Residues 7-19 show a composition bias toward low complexity; the sequence is KSVSPVPFNNSNN. A compositionally biased stretch (basic and acidic residues) spans 63–78; sequence RLLDPQNKKKQNRFER. Residues 79–92 are compositionally biased toward polar residues; it reads YSSSNHAQEQSSEE. The segment covering 169–181 has biased composition (low complexity); it reads SFSSSSEASDSKS. Positions 363–375 are enriched in polar residues; that stretch reads RSPSETKQYSPDA. Polar residues predominate over residues 616–629; it reads QYGHMSSSQNPHSE. Positions 630–639 are enriched in basic and acidic residues; that stretch reads TQNRSEEVRG. Residues 645 to 704 constitute a DNA-binding region (homeobox); sequence RKWNRAVFSLMQRRGLEKSFQSQKYVAKPERRKLADALSLTDAQVKIWFQNRRMKWRQEI. Residues 722–741 form a disordered region; that stretch reads EIEKEKTQTPSDEGEVINVD.

It belongs to the H2.0 homeobox family. As to expression, expressed in the tissues of endodermal origin.

It localises to the nucleus. This is Homeobox protein AHox1 (AHOX1) from Halocynthia roretzi (Sea squirt).